Here is a 90-residue protein sequence, read N- to C-terminus: Auxin-responsive protein SAUR24 (90 aa).

Belongs to the ARG7 family.

It is found in the cell membrane. Functions as a positive effector of cell expansion through modulation of auxin transport. The polypeptide is Auxin-responsive protein SAUR24 (Arabidopsis thaliana (Mouse-ear cress)).